A 150-amino-acid chain; its full sequence is uncharacterized protein (150 aa).

This is an uncharacterized protein from Saccharomyces cerevisiae (strain ATCC 204508 / S288c) (Baker's yeast).